Reading from the N-terminus, the 87-residue chain is Small ribosomal subunit protein eS21 (87 aa).

This sequence belongs to the eukaryotic ribosomal protein eS21 family. Component of the small ribosomal subunit. Mature ribosomes consist of a small (40S) and a large (60S) subunit. The 40S subunit contains about 33 different proteins and 1 molecule of RNA (18S). The 60S subunit contains about 49 different proteins and 3 molecules of RNA (25S, 5.8S and 5S).

Its subcellular location is the cytoplasm. Functionally, required for the processing of the 20S rRNA-precursor to mature 18S rRNA in a late step of the maturation of 40S ribosomal subunits. Has a physiological role leading to 18S rRNA stability. The protein is Small ribosomal subunit protein eS21 (RPS21) of Eremothecium gossypii (strain ATCC 10895 / CBS 109.51 / FGSC 9923 / NRRL Y-1056) (Yeast).